Consider the following 299-residue polypeptide: Palmitoyltransferase ZDHHC3 (299 aa).

The Cytoplasmic portion of the chain corresponds to 1-47 (MMLIPTHHFRNIERKPEYLQPEKCVPPPYPGPVGTMWFIRDGCGIAC). At Tyr-18 the chain carries Phosphotyrosine. Residues 48-68 (AIVTWFLVLYAEFVVLFVMLI) traverse the membrane as a helical segment. The Extracellular portion of the chain corresponds to 69-72 (PSRD). A helical transmembrane segment spans residues 73 to 93 (YVYSIINGIVFNLLAFLALAS). Residues 94–171 (HCRAMLTDPG…NCVGENNQKY (78 aa)) lie on the Cytoplasmic side of the membrane. The DHHC domain occupies 127–177 (YKCPKCCSIKPDRAHHCSVCKRCIRKMDHHCPWVNNCVGENNQKYFVLFTM). The S-palmitoyl cysteine moiety is linked to residue Cys-146. Cys-157 functions as the S-palmitoyl cysteine intermediate in the catalytic mechanism. The chain crosses the membrane as a helical span at residues 172–192 (FVLFTMYIALISLHALIMVGF). Topologically, residues 193–214 (HFLHCFEEDWTKCSSFSPPTTV) are extracellular. The chain crosses the membrane as a helical span at residues 215–235 (ILLILLCFEGLLFLIFTSVMF). Topologically, residues 236–299 (GTQVHSICTD…GKADPYQYVV (64 aa)) are cytoplasmic.

This sequence belongs to the DHHC palmitoyltransferase family. In terms of assembly, monomer. Homooligomers. The monomeric form has a higher catalytic activity. Forms heterooligomers with ZDHHC7. Interacts with TNFRSF10A. In terms of processing, autopalmitoylated. Post-translationally, phosphorylation by FGFR1 and SRC probably regulates the palmitoyltransferase activity. Widely expressed with significant expression in heart, lung, liver, skeletal muscle, kidney, testis, thymus, small intestine and leukocyte.

It is found in the golgi apparatus membrane. The enzyme catalyses L-cysteinyl-[protein] + hexadecanoyl-CoA = S-hexadecanoyl-L-cysteinyl-[protein] + CoA. It catalyses the reaction L-cysteinyl-[protein] + tetradecanoyl-CoA = S-tetradecanoyl-L-cysteinyl-[protein] + CoA. It carries out the reaction L-cysteinyl-[protein] + octadecanoyl-CoA = S-octadecanoyl-L-cysteinyl-[protein] + CoA. Its function is as follows. Golgi-localized palmitoyltransferase that catalyzes the addition of palmitate onto various protein substrates. Has no stringent fatty acid selectivity and in addition to palmitate can also transfer onto target proteins myristate from tetradecanoyl-CoA and stearate from octadecanoyl-CoA. Plays an important role in G protein-coupled receptor signaling pathways involving GNAQ and potentially other heterotrimeric G proteins by regulating their dynamic association with the plasma membrane. Palmitoylates ITGA6 and ITGB4, thereby regulating the alpha-6/beta-4 integrin localization, expression and function in cell adhesion to laminin. Plays a role in the TRAIL-activated apoptotic signaling pathway most probably through the palmitoylation and localization to the plasma membrane of TNFRSF10A. In the brain, by palmitoylating the gamma subunit GABRG2 of GABA(A) receptors and regulating their postsynaptic accumulation, plays a role in synaptic GABAergic inhibitory function and GABAergic innervation. Palmitoylates the neuronal protein GAP43 which is also involved in the formation of GABAergic synapses. Palmitoylates NCDN thereby regulating its association with endosome membranes. Probably palmitoylates PRCD and is involved in its proper localization within the photoreceptor. Could mediate the palmitoylation of NCAM1 and regulate neurite outgrowth. Could palmitoylate DNAJC5 and regulate its localization to Golgi membranes. Also constitutively palmitoylates DLG4. May also palmitoylate SNAP25. Could palmitoylate the glutamate receptors GRIA1 and GRIA2 but this has not been confirmed in vivo. Could also palmitoylate the D(2) dopamine receptor DRD2. May also palmitoylate LAMTOR1, promoting its localization to lysosomal membranes. Palmitoylates the Toll-like receptor 9/TLR9 in the Golgi and thereby regulates TLR9 trafficking to endosomes. May palmitoylate CALHM1 and CALHM3 subunits of gustatory voltage-gated ion channels and modulate channel gating and kinetics. Functionally, may also function as a calcium transporter. The sequence is that of Palmitoyltransferase ZDHHC3 from Homo sapiens (Human).